Here is a 1274-residue protein sequence, read N- to C-terminus: Vacuolar protein sorting-associated protein 8 (1274 aa).

Met-1 is subject to N-acetylmethionine. WD repeat units lie at residues Thr-75 to Leu-119, Ser-131 to Pro-170, and His-193 to Leu-233. CHCR repeat units lie at residues Leu-507 to Asn-665 and Phe-915 to Ser-1092. An RING-type; atypical zinc finger spans residues Cys-1198–Gln-1266.

This sequence belongs to the VPS8 family.

It localises to the golgi apparatus. It is found in the golgi stack. In terms of biological role, required for localization and recycling of the CPY sorting receptor (VPS10) to the late-Golgi compartment. Involved in the retention of proteins to the late-Golgi. Plays an integral role in the complex vacuolar protein sorting process. The protein is Vacuolar protein sorting-associated protein 8 (VPS8) of Saccharomyces cerevisiae (strain ATCC 204508 / S288c) (Baker's yeast).